The chain runs to 277 residues: MEIITDIAPLRARLRHEASVAFVPTMGNLHAGHLSLVRIAQKHASCSVVSIFVNRLQFAPHEDFDRYPRTWSDDCRLLEEQGADIVFMPDEKTLYPVPQEFQLLLPPVADTLEGACRPGFFRGVTTVVLKLFNIVQPHIAVFGEKDYQQLQVVHRMVDQLNLPVEIIAGETVRDEDGLALSSRNNYLDATQRQEAGELAHHLKQIRDSIASGERDFPLLEQLAAEKLSKRGWVVDYVAVRQQHTLLPVAASDSSLVILGAAWLNQTRLIDNFLLTLP.

26–33 (MGNLHAGH) contributes to the ATP binding site. The Proton donor role is filled by His33. Gln57 is a binding site for (R)-pantoate. Gln57 serves as a coordination point for beta-alanine. 143 to 146 (GEKD) is an ATP binding site. Gln149 contributes to the (R)-pantoate binding site. Residues Val172 and 180-183 (LSSR) each bind ATP.

It belongs to the pantothenate synthetase family. As to quaternary structure, homodimer.

The protein localises to the cytoplasm. It carries out the reaction (R)-pantoate + beta-alanine + ATP = (R)-pantothenate + AMP + diphosphate + H(+). Its pathway is cofactor biosynthesis; (R)-pantothenate biosynthesis; (R)-pantothenate from (R)-pantoate and beta-alanine: step 1/1. Functionally, catalyzes the condensation of pantoate with beta-alanine in an ATP-dependent reaction via a pantoyl-adenylate intermediate. The protein is Pantothenate synthetase of Nitrosomonas europaea (strain ATCC 19718 / CIP 103999 / KCTC 2705 / NBRC 14298).